The chain runs to 123 residues: Large ribosomal subunit protein bL19 (123 aa).

The protein belongs to the bacterial ribosomal protein bL19 family.

Its function is as follows. This protein is located at the 30S-50S ribosomal subunit interface and may play a role in the structure and function of the aminoacyl-tRNA binding site. This is Large ribosomal subunit protein bL19 from Ureaplasma parvum serovar 3 (strain ATCC 27815 / 27 / NCTC 11736).